The primary structure comprises 126 residues: MHAIMLKAKLHRAEVTHAVLDYEGSCAIDGEWLDLSGIREYEQIQIYNVDNGERFTTYAIRGEEGSRMISVNGAAAHKAKVGDRVIICAYAHYSEAELVNFKPRMLYMAPGNELSRASNAIPVQLA.

The active-site Schiff-base intermediate with substrate; via pyruvic acid is the Ser25. The residue at position 25 (Ser25) is a Pyruvic acid (Ser). Thr57 is a binding site for substrate. Tyr58 serves as the catalytic Proton donor. 73 to 75 (GAA) contacts substrate.

Belongs to the PanD family. In terms of assembly, heterooctamer of four alpha and four beta subunits. Pyruvate is required as a cofactor. Post-translationally, is synthesized initially as an inactive proenzyme, which is activated by self-cleavage at a specific serine bond to produce a beta-subunit with a hydroxyl group at its C-terminus and an alpha-subunit with a pyruvoyl group at its N-terminus.

The protein resides in the cytoplasm. It catalyses the reaction L-aspartate + H(+) = beta-alanine + CO2. It participates in cofactor biosynthesis; (R)-pantothenate biosynthesis; beta-alanine from L-aspartate: step 1/1. In terms of biological role, catalyzes the pyruvoyl-dependent decarboxylation of aspartate to produce beta-alanine. The sequence is that of Aspartate 1-decarboxylase from Pseudomonas fluorescens.